The primary structure comprises 197 residues: Protein GrpE (197 aa).

Positions 1 to 12 are enriched in basic and acidic residues; that stretch reads MTDSDGKTDKSG. Positions 1–35 are disordered; it reads MTDSDGKTDKSGEPAAEVEPVVSKPYVMPDDPEDD.

Belongs to the GrpE family. As to quaternary structure, homodimer.

Its subcellular location is the cytoplasm. Participates actively in the response to hyperosmotic and heat shock by preventing the aggregation of stress-denatured proteins, in association with DnaK and GrpE. It is the nucleotide exchange factor for DnaK and may function as a thermosensor. Unfolded proteins bind initially to DnaJ; upon interaction with the DnaJ-bound protein, DnaK hydrolyzes its bound ATP, resulting in the formation of a stable complex. GrpE releases ADP from DnaK; ATP binding to DnaK triggers the release of the substrate protein, thus completing the reaction cycle. Several rounds of ATP-dependent interactions between DnaJ, DnaK and GrpE are required for fully efficient folding. The sequence is that of Protein GrpE from Nitrobacter winogradskyi (strain ATCC 25391 / DSM 10237 / CIP 104748 / NCIMB 11846 / Nb-255).